The following is a 730-amino-acid chain: Propionyl-CoA carboxylase alpha chain, mitochondrial (730 aa).

A mitochondrion-targeting transit peptide spans 1 to 52; that stretch reads MAGLWVGGSVLVAAGRRGSRSPRPLMRSVALWTLKHVPQYSRQRLLVSRSLC. In terms of domain architecture, Biotin carboxylation spans 62–509; it reads TFDKILIANR…NTKFLSDVYP (448 aa). N6-acetyllysine; alternate is present on Lys-65. N6-succinyllysine; alternate is present on Lys-65. Lys-119 is modified (N6-succinyllysine). Lys-150 carries the post-translational modification N6-acetyllysine; alternate. Lys-150 is modified (N6-succinyllysine; alternate). Lys-154 carries the N6-acetyllysine modification. Lys-177 is a binding site for ATP. An ATP-grasp domain is found at 181-378; the sequence is KLLAKKAKVN…LVQEMIRVAK (198 aa). Lys-188 bears the N6-succinyllysine mark. The residue at position 200 (Lys-200) is an N6-acetyllysine; alternate. Lys-200 is modified (N6-succinyllysine; alternate). ATP contacts are provided by residues 209–270, Glu-261, and Asn-296; that span reads AREI…PRHI. Residue Ser-252 is modified to Phosphoserine. Lys-262 bears the N6-succinyllysine mark. Glu-336, Glu-349, and Asn-351 together coordinate Mg(2+). Mn(2+) is bound by residues Glu-336, Glu-349, and Asn-351. Residue Glu-349 is part of the active site. An N6-succinyllysine modification is found at Lys-407. Biotin is bound at residue Phe-409. Lys-502, Lys-513, and Lys-650 each carry N6-succinyllysine. A Biotinyl-binding domain is found at 655–730; the sequence is KAAEDTSSIL…GEGDLLVELE (76 aa). An N6-biotinyllysine modification is found at Lys-696.

In terms of assembly, the holoenzyme is a dodecamer composed of 6 PCCA/alpha subunits and 6 PCCB/beta subunits. Interacts (via the biotin carboxylation domain) with SIRT4. Interacts with SIRT3 and SIRT5. It depends on Mg(2+) as a cofactor. Requires Mn(2+) as cofactor. Biotin serves as cofactor. In terms of processing, acetylated. Post-translationally, the biotin cofactor is covalently attached to the C-terminal biotinyl-binding domain and is required for the catalytic activity. Biotinylation is catalyzed by HLCS.

The protein localises to the mitochondrion matrix. It catalyses the reaction propanoyl-CoA + hydrogencarbonate + ATP = (S)-methylmalonyl-CoA + ADP + phosphate + H(+). The catalysed reaction is butanoyl-CoA + hydrogencarbonate + ATP = (2S)-ethylmalonyl-CoA + ADP + phosphate + H(+). It functions in the pathway metabolic intermediate metabolism; propanoyl-CoA degradation; succinyl-CoA from propanoyl-CoA: step 1/3. In terms of biological role, this is one of the 2 subunits of the biotin-dependent propionyl-CoA carboxylase (PCC), a mitochondrial enzyme involved in the catabolism of odd chain fatty acids, branched-chain amino acids isoleucine, threonine, methionine, and valine and other metabolites. Propionyl-CoA carboxylase catalyzes the carboxylation of propionyl-CoA/propanoyl-CoA to D-methylmalonyl-CoA/(S)-methylmalonyl-CoA. Within the holoenzyme, the alpha subunit catalyzes the ATP-dependent carboxylation of the biotin carried by the biotin carboxyl carrier (BCC) domain, while the beta subunit then tranfers the carboxyl group from carboxylated biotin to propionyl-CoA. Propionyl-CoA carboxylase also significantly acts on butyryl-CoA/butanoyl-CoA, which is converted to ethylmalonyl-CoA/(2S)-ethylmalonyl-CoA at a much lower rate. Other alternative minor substrates include (2E)-butenoyl-CoA/crotonoyl-CoA. This is Propionyl-CoA carboxylase alpha chain, mitochondrial from Sus scrofa (Pig).